Consider the following 496-residue polypeptide: Glutamate--tRNA ligase 2 (496 aa).

The short motif at 13-23 (PSPTGRLHVGG) is the 'HIGH' region element. The 'KMSKS' region motif lies at 255–259 (KLSKR). Lys258 is an ATP binding site.

Belongs to the class-I aminoacyl-tRNA synthetase family. Glutamate--tRNA ligase type 1 subfamily. As to quaternary structure, monomer.

It is found in the cytoplasm. It catalyses the reaction tRNA(Glu) + L-glutamate + ATP = L-glutamyl-tRNA(Glu) + AMP + diphosphate. In terms of biological role, catalyzes the attachment of glutamate to tRNA(Glu) in a two-step reaction: glutamate is first activated by ATP to form Glu-AMP and then transferred to the acceptor end of tRNA(Glu). The chain is Glutamate--tRNA ligase 2 from Rubrobacter xylanophilus (strain DSM 9941 / JCM 11954 / NBRC 16129 / PRD-1).